Consider the following 524-residue polypeptide: FAD-dependent monooxygenase opdD (524 aa).

Residues Glu48 and Arg145 each contribute to the FAD site.

It belongs to the paxM FAD-dependent monooxygenase family.

It participates in secondary metabolite biosynthesis. In terms of biological role, FAD-dependent monooxygenase; part of the gene cluster that mediates the biosynthesis of oxopyrrolidines, polyketide-amino acid hybrid compounds with feature structures of tetramic acid. Does not seem to play a role in oxopyrrolidines A and B biosynthesis. May be involved in further modifications of these oxopyrrolidines. The chain is FAD-dependent monooxygenase opdD from Penicillium oxalicum (strain 114-2 / CGMCC 5302) (Penicillium decumbens).